The sequence spans 201 residues: MNVEQVYKDANALLEGHFLLASGNHSSRYLQSAKVLEYPQKASLLTDALAEMIRENGIEVDTVCAPALGGVIAGYELARSLGVRSIFVEKKESGMELRRGFEVSPGEKIIICEDIITTGGSALKAAEAIEALGAKVVAFASLANRGFCKRVGGSNEAKSECKLPKDVPFFALEDFTFEMYTPEECPMCKEGSTAIKPGSKG.

Residues Lys-90 and 113–121 each bind 5-phospho-alpha-D-ribose 1-diphosphate; that span reads EDIITTGGS. Thr-117 and Arg-145 together coordinate orotate.

This sequence belongs to the purine/pyrimidine phosphoribosyltransferase family. PyrE subfamily. As to quaternary structure, homodimer. It depends on Mg(2+) as a cofactor.

The catalysed reaction is orotidine 5'-phosphate + diphosphate = orotate + 5-phospho-alpha-D-ribose 1-diphosphate. It functions in the pathway pyrimidine metabolism; UMP biosynthesis via de novo pathway; UMP from orotate: step 1/2. In terms of biological role, catalyzes the transfer of a ribosyl phosphate group from 5-phosphoribose 1-diphosphate to orotate, leading to the formation of orotidine monophosphate (OMP). The protein is Orotate phosphoribosyltransferase of Sulfurovum sp. (strain NBC37-1).